The sequence spans 802 residues: Post-transcriptional regulator mkt1 (802 aa).

S227, S228, and S230 each carry phosphoserine.

It belongs to the XPG/RAD2 endonuclease family. Interacts with pab1 binding protein ath1.

Functionally, involved in post-transcriptional regulation of gene expression by 3'-UTR-mediated RNA regulation. Promotes interactions between mRNA and poly(A)-binding protein. Binds the 3' UTR of mRNAs, centromeric transcripts and antisense-rDNA. Required for the establishment but not the maintenance of heterochromatin at pericentromeres, and for the maintenance of small domains of facultative heterochromatin known as HOODs. The sequence is that of Post-transcriptional regulator mkt1 from Schizosaccharomyces pombe (strain 972 / ATCC 24843) (Fission yeast).